The sequence spans 246 residues: Large ribosomal subunit protein uL3 (246 aa).

Disordered stretches follow at residues serine 140–methionine 162 and aspartate 215–alanine 246. The residue at position 151 (glutamine 151) is an N5-methylglutamine. Low complexity predominate over residues glutamate 234–alanine 246.

This sequence belongs to the universal ribosomal protein uL3 family. In terms of assembly, part of the 50S ribosomal subunit. Forms a cluster with proteins L14 and L19. In terms of processing, methylated by PrmB.

One of the primary rRNA binding proteins, it binds directly near the 3'-end of the 23S rRNA, where it nucleates assembly of the 50S subunit. The sequence is that of Large ribosomal subunit protein uL3 from Methylorubrum extorquens (strain PA1) (Methylobacterium extorquens).